The chain runs to 144 residues: Large ribosomal subunit protein uL16 (144 aa).

Basic residues predominate over residues 1–16 (MLQPKKTKFRRQQKGR). Positions 1 to 22 (MLQPKKTKFRRQQKGRMKGEAQ) are disordered.

It belongs to the universal ribosomal protein uL16 family. As to quaternary structure, part of the 50S ribosomal subunit.

Binds 23S rRNA and is also seen to make contacts with the A and possibly P site tRNAs. The protein is Large ribosomal subunit protein uL16 of Parabacteroides distasonis (strain ATCC 8503 / DSM 20701 / CIP 104284 / JCM 5825 / NCTC 11152).